A 189-amino-acid chain; its full sequence is Hypoxanthine/guanine phosphoribosyltransferase (189 aa).

The protein belongs to the purine/pyrimidine phosphoribosyltransferase family. Archaeal HPRT subfamily. Homodimer.

Its subcellular location is the cytoplasm. The enzyme catalyses IMP + diphosphate = hypoxanthine + 5-phospho-alpha-D-ribose 1-diphosphate. It catalyses the reaction GMP + diphosphate = guanine + 5-phospho-alpha-D-ribose 1-diphosphate. The protein operates within purine metabolism; IMP biosynthesis via salvage pathway; IMP from hypoxanthine: step 1/1. In terms of biological role, catalyzes a salvage reaction resulting in the formation of IMP that is energically less costly than de novo synthesis. The chain is Hypoxanthine/guanine phosphoribosyltransferase from Methanothermus fervidus (strain ATCC 43054 / DSM 2088 / JCM 10308 / V24 S).